The primary structure comprises 652 residues: tRNA-guanine(15) transglycosylase (652 aa).

D88 serves as the catalytic Nucleophile. D123 and A194 together coordinate substrate. Zn(2+) contacts are provided by C280, C282, and C285. The region spanning 577–652 (KYRVVIDSEV…AAVSVRSGFK (76 aa)) is the PUA domain.

Belongs to the archaeosine tRNA-ribosyltransferase family. Zn(2+) serves as cofactor.

The enzyme catalyses guanosine(15) in tRNA + 7-cyano-7-deazaguanine = 7-cyano-7-carbaguanosine(15) in tRNA + guanine. It functions in the pathway tRNA modification; archaeosine-tRNA biosynthesis. Its function is as follows. Exchanges the guanine residue with 7-cyano-7-deazaguanine (preQ0) at position 15 in the dihydrouridine loop (D-loop) of archaeal tRNAs. The protein is tRNA-guanine(15) transglycosylase of Methanococcus aeolicus (strain ATCC BAA-1280 / DSM 17508 / OCM 812 / Nankai-3).